The primary structure comprises 184 residues: UPF0149 protein PA14_69010 (184 aa).

This sequence belongs to the UPF0149 family.

The protein is UPF0149 protein PA14_69010 of Pseudomonas aeruginosa (strain UCBPP-PA14).